Here is a 191-residue protein sequence, read N- to C-terminus: Ureidoglycolate lyase (191 aa).

Belongs to the ureidoglycolate lyase family. In terms of assembly, homodimer.

It carries out the reaction (S)-ureidoglycolate = urea + glyoxylate. It functions in the pathway nitrogen metabolism; (S)-allantoin degradation. Its function is as follows. Catalyzes the catabolism of the allantoin degradation intermediate (S)-ureidoglycolate, generating urea and glyoxylate. Involved in the utilization of allantoin as secondary nitrogen source when primary sources are limiting. This is Ureidoglycolate lyase from Schizosaccharomyces pombe (strain 972 / ATCC 24843) (Fission yeast).